Consider the following 291-residue polypeptide: Glucose and ribitol dehydrogenase (291 aa).

The tract at residues 1–35 (MASGGQFPPQKQESQPGKEHLMDPSPQHASPHYKP) is disordered. 45 to 69 (LVTGGDSGIGRSVCYHFALEGATVA) contacts NAD(+). Ser183 serves as a coordination point for substrate. Tyr196 functions as the Proton acceptor in the catalytic mechanism.

The protein belongs to the short-chain dehydrogenases/reductases (SDR) family. Expressed in embryogenic cells, somatic embryos and seeds in the later stages of development, but not in non-embryogenic cells and mature leaves.

Its function is as follows. May act as a short alcohol-polyol-sugar dehydrogenase possibly related to carbohydrate metabolism and the acquisition of desiccation tolerance. May also be involved in signal transduction. In Daucus carota (Wild carrot), this protein is Glucose and ribitol dehydrogenase (CAISE5).